A 397-amino-acid polypeptide reads, in one-letter code: 8-amino-7-oxononanoate synthase (397 aa).

Arginine 23 provides a ligand contact to substrate. Pyridoxal 5'-phosphate is bound at residue 110–111 (GY). Residue histidine 135 participates in substrate binding. Residues serine 181, histidine 209, and threonine 237 each coordinate pyridoxal 5'-phosphate. The residue at position 240 (lysine 240) is an N6-(pyridoxal phosphate)lysine. Position 354 (threonine 354) interacts with substrate.

The protein belongs to the class-II pyridoxal-phosphate-dependent aminotransferase family. BioF subfamily. As to quaternary structure, homodimer. The cofactor is pyridoxal 5'-phosphate.

It catalyses the reaction 6-carboxyhexanoyl-[ACP] + L-alanine + H(+) = (8S)-8-amino-7-oxononanoate + holo-[ACP] + CO2. It functions in the pathway cofactor biosynthesis; biotin biosynthesis. Its function is as follows. Catalyzes the decarboxylative condensation of pimeloyl-[acyl-carrier protein] and L-alanine to produce 8-amino-7-oxononanoate (AON), [acyl-carrier protein], and carbon dioxide. This is 8-amino-7-oxononanoate synthase from Anaeromyxobacter dehalogenans (strain 2CP-C).